A 31-amino-acid chain; its full sequence is Protamine-YI (31 aa).

Residues 1-31 (ARRRRSSSRPIRRRRPRRRTTRRRRAGRRRR) are disordered.

As to expression, testis.

It is found in the nucleus. It localises to the chromosome. In terms of biological role, protamines substitute for histones in the chromatin of sperm during the haploid phase of spermatogenesis. They compact sperm DNA into a highly condensed, stable and inactive complex. This Clupea harengus (Atlantic herring) protein is Protamine-YI.